The chain runs to 365 residues: Oligosaccharides import ATP-binding protein MsmX (365 aa).

Positions L4 to I235 constitute an ABC transporter domain. ATP is bound at residue G37–S44.

It belongs to the ABC transporter superfamily. As to quaternary structure, the complex involved in maltodextrin import is composed of two ATP-binding proteins (MsmX), two transmembrane proteins (MdxF and MdxG) and a solute-binding protein (MdxE). The complex involved in arabinooligosaccharides uptake is composed of two ATP-binding proteins (MsmX), two transmembrane proteins (AraP and AraQ) and a solute-binding protein (AraN). The complex involved in galactooligosaccharides uptake is composed of two ATP-binding proteins (MsmX), two transmembrane proteins (GanP and GanQ) and a solute-binding protein (GanS). The complex involved in melibiose, raffinose and stachyose import is composed of two ATP-binding proteins (MsmX), two transmembrane proteins (MelC and MelD) and a solute-binding protein (MelE). The complex involved in polygalacturonan and rhamnogalacturonan type I uptake is probably composed of two ATP-binding proteins (MsmX), two transmembrane proteins (YtcP and YteP) and a solute-binding protein (YtcQ).

Its subcellular location is the cell membrane. Required to energize different ABC-type saccharide transporters. Part of the MdxEFG-MsmX ABC transporter complex involved in maltodextrin import, of the AraNPQ-MsmX complex involved in arabinooligosaccharides import, of the GanPQS-MsmX complex involved in galactooligosaccharides import, and of the MelEDC-MsmX complex involved in melibiose, raffinose and stachyose import. Is probably also part of the ABC transporter complex YtcQP-YteP-MsmX involved in polygalacturonan and rhamnogalacturonan type I import during pectin degradation. Responsible for energy coupling to the transport system. The protein is Oligosaccharides import ATP-binding protein MsmX (msmX) of Bacillus subtilis (strain 168).